Consider the following 156-residue polypeptide: Ribosomal RNA large subunit methyltransferase H (156 aa).

S-adenosyl-L-methionine-binding positions include Leu-73, Gly-104, and 123–128; that span reads LSALTL.

This sequence belongs to the RNA methyltransferase RlmH family. As to quaternary structure, homodimer.

It localises to the cytoplasm. It catalyses the reaction pseudouridine(1915) in 23S rRNA + S-adenosyl-L-methionine = N(3)-methylpseudouridine(1915) in 23S rRNA + S-adenosyl-L-homocysteine + H(+). In terms of biological role, specifically methylates the pseudouridine at position 1915 (m3Psi1915) in 23S rRNA. The protein is Ribosomal RNA large subunit methyltransferase H of Erwinia tasmaniensis (strain DSM 17950 / CFBP 7177 / CIP 109463 / NCPPB 4357 / Et1/99).